Consider the following 82-residue polypeptide: RNA-binding protein Hfq (82 aa).

The Sm domain occupies 9 to 69; that stretch reads DQLLNTARKD…ISTIIPAKII (61 aa).

The protein belongs to the Hfq family. Homohexamer.

Its function is as follows. RNA chaperone that binds small regulatory RNA (sRNAs) and mRNAs to facilitate mRNA translational regulation in response to envelope stress, environmental stress and changes in metabolite concentrations. Also binds with high specificity to tRNAs. The protein is RNA-binding protein Hfq of Leptospira borgpetersenii serovar Hardjo-bovis (strain L550).